The chain runs to 149 residues: Alpha-amylase/trypsin inhibitor CMb (149 aa).

Positions 1 to 24 (MASKSSCDLLLAAVLVSIFAAVAA) are cleaved as a signal peptide. N124 is a glycosylation site (N-linked (GlcNAc...) asparagine).

This sequence belongs to the protease inhibitor I6 (cereal trypsin/alpha-amylase inhibitor) family. Heterotetramer of one CMa, one CMb and two CMd chains. Post-translationally, five disulfide bonds, which are essential for the inhibitor activity, are probably present. Exists both in a glycosylated and in an unglycosylated form. The glycosylated form is a potent allergen. Endosperm.

It localises to the secreted. In terms of biological role, part of a complex with inhibitory activity, but CMb is inactive as a separate subunit. In Hordeum vulgare (Barley), this protein is Alpha-amylase/trypsin inhibitor CMb (IAT2).